Reading from the N-terminus, the 1992-residue chain is E3 ubiquitin-protein ligase TRIP12 (1992 aa).

Residues 1–10 (MSNRPNNNPG) are compositionally biased toward polar residues. Disordered stretches follow at residues 1-398 (MSNR…DDSE), 797-817 (QRKP…SKKD), and 938-1080 (SLLT…ASKD). The residue at position 2 (S2) is an N-acetylserine. S12 is subject to Phosphoserine. A compositionally biased stretch (polar residues) spans 18 to 27 (RNTAGAQPQD). Over residues 48–70 (DPDRANTSERQKTGQVPKKDNSR) the composition is skewed to basic and acidic residues. Phosphoserine is present on residues S77, S85, and S100. A compositionally biased stretch (polar residues) spans 78 to 88 (PDYNRTNSPSS). Residues 119-132 (EQQLKSAQSPSTSK) show a composition bias toward polar residues. Low complexity-rich tracts occupy residues 154-166 (SSCV…SEST) and 175-216 (PTKL…SSTV). K181 is modified (N6-acetyllysine). Positions 280-290 (PGSSKSETSKP) are enriched in polar residues. Residues S310 and S312 each carry the phosphoserine modification. Over residues 326 to 338 (QKTTGSCASTSRR) the composition is skewed to polar residues. A compositionally biased stretch (basic and acidic residues) spans 346–358 (GAAEARRQEKMAD). Polar residues-rich tracts occupy residues 360-371 (ESNQEAVNSSAA) and 803-812 (LANSNTSGYS). One can recognise a WWE domain in the interval 749–836 (MLKKGNAQNT…DPELAKSFIK (88 aa)). S942 is subject to Phosphoserine. Positions 948-973 (TNGSGSMGSTTSVSSGTATAATHAAA) are enriched in low complexity. Phosphoserine occurs at positions 991 and 997. Residues 1001-1014 (KRKRLPKRGPRRPK) are compositionally biased toward basic residues. At S1016 the chain carries Phosphoserine. Positions 1017–1026 (PPRDDDKVDN) are enriched in basic and acidic residues. A compositionally biased stretch (low complexity) spans 1029–1040 (KSPTTTQSPKSS). The residue at position 1030 (S1030) is a Phosphoserine. Residues 1041–1062 (FLASLNPKTWGRLSTQSNSNNI) show a composition bias toward polar residues. Phosphoserine is present on residues S1317, S1322, S1329, and S1376. At T1377 the chain carries Phosphothreonine. 2 disordered regions span residues 1407–1433 (SNKD…NAKK) and 1568–1587 (TNPE…PRLD). K1425 bears the N6-acetyllysine mark. S1427 carries the phosphoserine modification. Residues 1496–1570 (EIIPTSEFIN…AMQRLLDTNP (75 aa)) are K-box. Residues 1885–1992 (PDHGYTHDSR…REGQQSFHLS (108 aa)) form the HECT domain. C1959 serves as the catalytic Glycyl thioester intermediate.

It belongs to the UPL family. K-HECT subfamily. Interacts with MYC; leading to disrupt interaction with isoform p19ARF/ARF of CDKN2A. Interacts with TRADD; leading to disrupt interaction with isoform p19ARF/ARF of CDKN2A. Interacts with SMARCC1; leading to disrupt interaction with SMARCE1.

The protein resides in the nucleus. It localises to the nucleoplasm. It catalyses the reaction S-ubiquitinyl-[E2 ubiquitin-conjugating enzyme]-L-cysteine + [acceptor protein]-L-lysine = [E2 ubiquitin-conjugating enzyme]-L-cysteine + N(6)-ubiquitinyl-[acceptor protein]-L-lysine.. It participates in protein modification; protein ubiquitination. E3 ubiquitin-protein ligase involved in ubiquitin fusion degradation (UFD) pathway and regulation of DNA repair. Part of the ubiquitin fusion degradation (UFD) pathway, a process that mediates ubiquitination of protein at their N-terminus, regardless of the presence of lysine residues in target proteins. Acts as a key regulator of DNA damage response by acting as a suppressor of RNF168, an E3 ubiquitin-protein ligase that promotes accumulation of 'Lys-63'-linked histone H2A and H2AX at DNA damage sites, thereby acting as a guard against excessive spreading of ubiquitinated chromatin at damaged chromosomes. In normal cells, mediates ubiquitination and degradation of isoform p19ARF/ARF of CDKN2A, a lysine-less tumor suppressor required for p53/TP53 activation under oncogenic stress. In cancer cells, however, isoform p19ARF/ARF and TRIP12 are located in different cell compartments, preventing isoform p19ARF/ARF ubiquitination and degradation. Does not mediate ubiquitination of isoform p16-INK4a of CDKN2A. Also catalyzes ubiquitination of NAE1 and SMARCE1, leading to their degradation. Ubiquitination and degradation of target proteins is regulated by interaction with proteins such as MYC, TRADD or SMARCC1, which disrupt the interaction between TRIP12 and target proteins. Mediates ubiquitination of ASXL1: following binding to N(6)-methyladenosine methylated DNA, ASXL1 is ubiquitinated by TRIP12, leading to its degradation and subsequent inactivation of the PR-DUB complex. This is E3 ubiquitin-protein ligase TRIP12 (TRIP12) from Homo sapiens (Human).